The following is a 125-amino-acid chain: Small ribosomal subunit protein eS8 (125 aa).

It belongs to the eukaryotic ribosomal protein eS8 family. Part of the 30S ribosomal subunit.

This is Small ribosomal subunit protein eS8 from Methanosarcina acetivorans (strain ATCC 35395 / DSM 2834 / JCM 12185 / C2A).